The sequence spans 250 residues: Ureidoacrylate amidohydrolase RutB (250 aa).

Catalysis depends on D44, which acts as the Proton acceptor. Residue K153 is part of the active site. Catalysis depends on C186, which acts as the Nucleophile.

It belongs to the isochorismatase family. RutB subfamily.

It catalyses the reaction (Z)-3-ureidoacrylate + H2O + H(+) = (Z)-3-aminoacrylate + NH4(+) + CO2. The enzyme catalyses (Z)-3-ureidoacrylate + H2O = (Z)-3-aminoacrylate + carbamate + H(+). The catalysed reaction is (Z)-2-methylureidoacrylate + H2O + H(+) = (Z)-2-methylaminoacrylate + NH4(+) + CO2. Its function is as follows. Hydrolyzes ureidoacrylate to form aminoacrylate and carbamate. The carbamate hydrolyzes spontaneously, thereby releasing one of the nitrogen atoms of the pyrimidine ring as ammonia and one of its carbon atoms as CO2. The polypeptide is Ureidoacrylate amidohydrolase RutB (Pantoea ananatis (strain LMG 20103)).